The chain runs to 489 residues: Glutamyl-tRNA(Gln) amidotransferase subunit A (489 aa).

Residues lysine 78 and serine 153 each act as charge relay system in the active site. Serine 177 functions as the Acyl-ester intermediate in the catalytic mechanism.

This sequence belongs to the amidase family. GatA subfamily. In terms of assembly, heterotrimer of A, B and C subunits.

It carries out the reaction L-glutamyl-tRNA(Gln) + L-glutamine + ATP + H2O = L-glutaminyl-tRNA(Gln) + L-glutamate + ADP + phosphate + H(+). Functionally, allows the formation of correctly charged Gln-tRNA(Gln) through the transamidation of misacylated Glu-tRNA(Gln) in organisms which lack glutaminyl-tRNA synthetase. The reaction takes place in the presence of glutamine and ATP through an activated gamma-phospho-Glu-tRNA(Gln). This chain is Glutamyl-tRNA(Gln) amidotransferase subunit A, found in Nitratidesulfovibrio vulgaris (strain DP4) (Desulfovibrio vulgaris).